The sequence spans 745 residues: MPFPVTTQGSQQTQPPQKHYGITSPISLAAPKETDCVLTQKLIETLKPFGVFEEEEELQRRILILGKLNNLVKEWIREISESKNLPQSVIENVGGKIFTFGSYRLGVHTKGADIDALCVAPRHVDRSDFFTSFYDKLKLQEEVKDLRAVEEAFVPVIKLCFDGIEIDILFARLALQTIPEDLDLRDDSLLKNLDIRCIRSLNGCRVTDEILHLVPNIDNFRLTLRAIKLWAKRHNIYSNILGFLGGVSWAMLVARTCQLYPNAIASTLVHKFFLVFSKWEWPNPVLLKQPEECNLNLPVWDPRVNPSDRYHLMPIITPAYPQQNSTYNVSVSTRMVMVEEFKQGLAITDEILLSKAEWSKLFEAPNFFQKYKHYIVLLASAPTEKQRLEWVGLVESKIRILVGSLEKNEFITLAHVNPQSFPAPKENPDKEEFRTMWVIGLVFKKTENSENLSVDLTYDIQSFTDTVYRQAINSKMFEVDMKIAAMHVKRKQLHQLLPNHVLQKKKKHSTEGVKLTALNDSSLDLSMDSDNSMSVPSPTSATKTSPLNSSGSSQGRNSPAPAVTAASVTNIQATEVSVPQVNSSESSGGTSSESIPQTATQPAISPPPKPTVSRVVSSTRLVNPPPRSSGNAATSGNAATKIPTPIVGVKRTSSPHKEESPKKTKTEEDETSEDANCLALSGHDKTEAKEQLDTETSTTQSETIQTAASLLASQKTSSTDLSDIPALPANPIPVIKNSIKLRLNR.

Residues 1-17 (MPFPVTTQGSQQTQPPQ) are compositionally biased toward low complexity. Residues 1–22 (MPFPVTTQGSQQTQPPQKHYGI) form a disordered region. A phosphoserine mark is found at serine 10 and serine 24. Residues 100–102 (FGS), threonine 109, 113–115 (DID), aspartate 167, lysine 228, tyrosine 237, and 246–247 (GV) contribute to the ATP site. Mg(2+) is bound by residues aspartate 113, aspartate 115, and aspartate 167. Residues lysine 444, lysine 445, lysine 506, and lysine 507 each participate in a glycyl lysine isopeptide (Lys-Gly) (interchain with G-Cter in SUMO) cross-link. Residues 490–507 (RKQLHQLLPNHVLQKKKK) carry the Nuclear localization signal 1 motif. Residues 508–643 (HSTEGVKLTA…TSGNAATKIP (136 aa)) form a ser/Thr-rich region. Over residues 523 to 534 (LDLSMDSDNSMS) the composition is skewed to low complexity. 2 disordered regions span residues 523–565 (LDLS…AVTA) and 577–704 (SVPQ…SETI). Residues 535 to 557 (VPSPTSATKTSPLNSSGSSQGRN) show a composition bias toward polar residues. Phosphoserine is present on residues serine 537 and serine 558. 2 stretches are compositionally biased toward low complexity: residues 583–594 (SSESSGGTSSES) and 611–640 (TVSR…NAAT). An N6-acetyllysine mark is found at lysine 641 and lysine 650. Residues 650 to 665 (KRTSSPHKEESPKKTK) carry the Nuclear localization signal 2 motif. Basic and acidic residues-rich tracts occupy residues 655–666 (PHKEESPKKTKT) and 682–692 (GHDKTEAKEQL). A required for interaction with NUDT21 region spans residues 677–745 (CLALSGHDKT…KNSIKLRLNR (69 aa)). Residues 694–704 (TETSTTQSETI) show a composition bias toward low complexity. At lysine 736 the chain carries N6-acetyllysine; alternate. Residue lysine 736 forms a Glycyl lysine isopeptide (Lys-Gly) (interchain with G-Cter in SUMO); alternate linkage. Serine 738 is subject to Phosphoserine. N6-acetyllysine; alternate is present on lysine 740. A Glycyl lysine isopeptide (Lys-Gly) (interchain with G-Cter in SUMO); alternate cross-link involves residue lysine 740.

It belongs to the poly(A) polymerase family. As to quaternary structure, monomer. Found in a complex with CPSF1, FIP1L1 and PAPOLA. Interacts with AHCYL1 and FIP1L1; the interaction with AHCYL1 seems to increase interaction with FIP1L1. Interacts with NUDT21; the interaction is diminished by acetylation. Interacts with KPNB1; the interaction promotes PAP nuclear import and is inhibited by acetylation of PAP. The cofactor is Mg(2+). Mn(2+) is required as a cofactor. Post-translationally, polysumoylated. Varying sumoylation depending on tissue- and cell-type. Highly sumoylated in bladder and NIH 3T3 cells. Sumoylation is required for nuclear localization and enhances PAP stability. Desumoylated by SENP1. Inhibits polymerase activity. Hyperphosphorylation on multiple CDK2 consensus and non-consensus sites in the C-terminal Ser/Thr-rich region represses PAP activity in late M-phase. Phosphorylation/dephosphorylation may regulate the interaction between PAP and CPSF. In terms of processing, acetylated in the C-terminus. Acetylation decreases interaction with NUDT21 and KPNB1, and inhibits nuclear localization through inhibiting binding to the importin alpha/beta complex.

It localises to the cytoplasm. It is found in the nucleus. The enzyme catalyses RNA(n) + ATP = RNA(n)-3'-adenine ribonucleotide + diphosphate. In terms of biological role, polymerase that creates the 3'-poly(A) tail of mRNA's. Also required for the endoribonucleolytic cleavage reaction at some polyadenylation sites. May acquire specificity through interaction with a cleavage and polyadenylation specificity factor (CPSF) at its C-terminus. This is Poly(A) polymerase alpha (PAPOLA) from Homo sapiens (Human).